We begin with the raw amino-acid sequence, 255 residues long: MVASGAATKGVTVMKQTPPAAVGRRHLLEISASAAGVIALSACSGSPPEPGKGRPDTTPEQEVPVTAPEDLMREHGVLKRILLIYREGIRRLQADDQSPAPALNESAQIIRRFIEDYHGQLEEQYVFPKLEQAGKLTDITSVLRTQHQRGRVLTDRVLAATTAAAAFDQPARDTLAQDMAAYIRMFEPHEAREDTVVFPALRDVMSAVEFRDMAETFEDEEHRRFGEAGFQSVVDKVADIEKSLGIYDLSQFTPS.

The interval 42-67 (ACSGSPPEPGKGRPDTTPEQEVPVTA) is disordered.

This is an uncharacterized protein from Mycobacterium tuberculosis (strain CDC 1551 / Oshkosh).